The following is a 412-amino-acid chain: uncharacterized protein (412 aa).

This sequence belongs to the PQQ oxidoreductase GdhB family. Requires pyrroloquinoline quinone as cofactor.

This is an uncharacterized protein from Synechocystis sp. (strain ATCC 27184 / PCC 6803 / Kazusa).